The chain runs to 87 residues: UPF0335 protein Meso_3367 (87 aa).

This sequence belongs to the UPF0335 family.

This is UPF0335 protein Meso_3367 from Chelativorans sp. (strain BNC1).